We begin with the raw amino-acid sequence, 456 residues long: 3-isopropylmalate dehydratase large subunit (456 aa).

The [4Fe-4S] cluster site is built by C336, C396, and C399.

This sequence belongs to the aconitase/IPM isomerase family. LeuC type 1 subfamily. Heterodimer of LeuC and LeuD. It depends on [4Fe-4S] cluster as a cofactor.

The catalysed reaction is (2R,3S)-3-isopropylmalate = (2S)-2-isopropylmalate. The protein operates within amino-acid biosynthesis; L-leucine biosynthesis; L-leucine from 3-methyl-2-oxobutanoate: step 2/4. Functionally, catalyzes the isomerization between 2-isopropylmalate and 3-isopropylmalate, via the formation of 2-isopropylmaleate. The protein is 3-isopropylmalate dehydratase large subunit of Staphylococcus epidermidis (strain ATCC 35984 / DSM 28319 / BCRC 17069 / CCUG 31568 / BM 3577 / RP62A).